Reading from the N-terminus, the 77-residue chain is Large ribosomal subunit protein eL14 (77 aa).

This sequence belongs to the eukaryotic ribosomal protein eL14 family.

In Methanococcus maripaludis (strain C6 / ATCC BAA-1332), this protein is Large ribosomal subunit protein eL14.